Reading from the N-terminus, the 150-residue chain is D-aminoacyl-tRNA deacylase (150 aa).

The Gly-cisPro motif, important for rejection of L-amino acids signature appears at 138–139 (GP).

It belongs to the DTD family. In terms of assembly, homodimer.

Its subcellular location is the cytoplasm. It catalyses the reaction glycyl-tRNA(Ala) + H2O = tRNA(Ala) + glycine + H(+). The catalysed reaction is a D-aminoacyl-tRNA + H2O = a tRNA + a D-alpha-amino acid + H(+). Functionally, an aminoacyl-tRNA editing enzyme that deacylates mischarged D-aminoacyl-tRNAs. Also deacylates mischarged glycyl-tRNA(Ala), protecting cells against glycine mischarging by AlaRS. Acts via tRNA-based rather than protein-based catalysis; rejects L-amino acids rather than detecting D-amino acids in the active site. By recycling D-aminoacyl-tRNA to D-amino acids and free tRNA molecules, this enzyme counteracts the toxicity associated with the formation of D-aminoacyl-tRNA entities in vivo and helps enforce protein L-homochirality. This Azobacteroides pseudotrichonymphae genomovar. CFP2 protein is D-aminoacyl-tRNA deacylase.